The primary structure comprises 270 residues: NADPH-dependent aldehyde reductase-like protein, chloroplastic (270 aa).

Residues 1–53 (MSTHSSISQPPLPLAGRVAIVTGSSRGIGRAIAIHLAELGARIVINYTSKAAD) constitute a chloroplast transit peptide. 26-50 (RGIGRAIAIHLAELGARIVINYTSK) provides a ligand contact to NADP(+). S165 is a substrate binding site. The Proton acceptor role is filled by Y178.

This sequence belongs to the short-chain dehydrogenases/reductases (SDR) family.

The protein localises to the plastid. It is found in the chloroplast. Functionally, aldehyde reductase that catalyzes the reduction of the aldehyde carbonyl groups on saturated and alpha,beta-unsaturated aldehydes with more than 5 carbons. The polypeptide is NADPH-dependent aldehyde reductase-like protein, chloroplastic (Arabidopsis thaliana (Mouse-ear cress)).